Reading from the N-terminus, the 85-residue chain is Toxin TdNa8 (85 aa).

The first 19 residues, 1 to 19, serve as a signal peptide directing secretion; that stretch reads MNYLTLIAAASLLTAGTES. One can recognise an LCN-type CS-alpha/beta domain in the interval 21–81; the sequence is KDGYPVKEGD…AAIKGYGRCR (61 aa). 4 cysteine pairs are disulfide-bonded: C31-C80, C35-C56, C42-C63, and C46-C65. At P82 the chain carries Proline amide.

It belongs to the long (4 C-C) scorpion toxin superfamily. Sodium channel inhibitor family. Alpha subfamily. In terms of tissue distribution, expressed by the venom gland.

The protein resides in the secreted. Alpha toxins bind voltage-independently at site-3 of sodium channels (Nav) and inhibit the inactivation of the activated channels, thereby blocking neuronal transmission. The protein is Toxin TdNa8 of Tityus discrepans (Venezuelan scorpion).